The primary structure comprises 521 residues: Solute carrier family 35 member F4 (521 aa).

The next 10 helical transmembrane spans lie at 160-180 (MVLK…SWVG), 192-212 (FYCP…FFPV), 248-266 (FLKR…NYLY), 277-297 (DVSA…WIVL), 301-321 (FMGV…MMAY), 330-350 (IIGV…KVLF), 365-385 (FVST…VILY), 395-417 (FAAL…NILV), 419-441 (VGVV…PGNA), and 450-470 (VIFN…FLLM). The EamA domain maps to 261 to 321 (LTNYLYLLAL…AITGIVMMAY (61 aa)).

It belongs to the SLC35F solute transporter family.

It localises to the membrane. Its function is as follows. Putative solute transporter. The chain is Solute carrier family 35 member F4 (SLC35F4) from Homo sapiens (Human).